A 248-amino-acid polypeptide reads, in one-letter code: Probable transcriptional regulatory protein PLES_43501 (248 aa).

This sequence belongs to the TACO1 family.

The protein resides in the cytoplasm. The chain is Probable transcriptional regulatory protein PLES_43501 from Pseudomonas aeruginosa (strain LESB58).